We begin with the raw amino-acid sequence, 160 residues long: Endoplasmic reticulum transmembrane protein 2 (160 aa).

At 1–2 (MG) the chain is on the lumenal side. The chain crosses the membrane as a helical span at residues 3-23 (VYLAVLFSLLVIEMAILFILV). The Cytoplasmic segment spans residues 24–45 (LPLPQRMRRWLYIRYSIISTNK). The chain crosses the membrane as a helical span at residues 46-66 (KFRTYMVGIMIFVGLLFIDSW). Topologically, residues 67–103 (KRSQIRVSTYRNQKNPYIINSVTPVDALASRAYNQRN) are lumenal. A helical transmembrane segment spans residues 104 to 124 (VYISGFIIYFYICILTVMSIL). The Cytoplasmic portion of the chain corresponds to 125-160 (RRIVEWNDKMKAGDDILKEKLRRKQKYLEELQKKKF). Residues 157 to 160 (KKKF) carry the Di-lysine motif motif.

The protein belongs to the BCAP29/BCAP31 family.

The protein localises to the endoplasmic reticulum membrane. May play a role in anterograde transport of membrane proteins from the endoplasmic reticulum to the Golgi. In Saccharomyces cerevisiae (strain ATCC 204508 / S288c) (Baker's yeast), this protein is Endoplasmic reticulum transmembrane protein 2 (YET2).